The primary structure comprises 271 residues: MGNKVIAMKSGRFIGVMSGTSLDGIDVVLAAIDERMVAQQASYCHPMPLQLKKDILGMCQGQSTTLSAVGKLESQLGILFAEAVLALLAKAGLTAQDITAIGCHGQTVWHEPLGEPAFTMQLGDNNRIAAMTKIATVGDFRRRDMAYGGQGAPLVPAFHHALLAHSTERRMVLNIGGIANLSMLLPDLPVRGFDTGPGNMLMDAWIWRNRSLPYDKDNEMDAPTFTASECLNVSVKTQKKERPHESIYSWYRLGKKCFPASWCRLQRSNCS.

The protein belongs to the anhydro-N-acetylmuramic acid kinase family.

This is an uncharacterized protein from Yersinia enterocolitica.